The primary structure comprises 68 residues: Erythrodihydroneopterin triphosphate synthetase (68 aa).

S66 bears the Phosphoserine mark.

This Cavia porcellus (Guinea pig) protein is Erythrodihydroneopterin triphosphate synthetase.